The chain runs to 291 residues: ATP synthase gamma chain (291 aa).

The protein belongs to the ATPase gamma chain family. As to quaternary structure, F-type ATPases have 2 components, CF(1) - the catalytic core - and CF(0) - the membrane proton channel. CF(1) has five subunits: alpha(3), beta(3), gamma(1), delta(1), epsilon(1). CF(0) has three main subunits: a, b and c.

It localises to the cell inner membrane. Produces ATP from ADP in the presence of a proton gradient across the membrane. The gamma chain is believed to be important in regulating ATPase activity and the flow of protons through the CF(0) complex. The protein is ATP synthase gamma chain of Xanthobacter autotrophicus (strain ATCC BAA-1158 / Py2).